The following is a 112-amino-acid chain: Conotoxin vil14.4 (112 aa).

Residues 1 to 22 (MGFRVLVLVVMATTSALPFTFF) form the signal peptide. The propeptide occupies 23 to 85 (EEPGRSPFRP…FAELSVGQRR (63 aa)). 2 cysteine pairs are disulfide-bonded: Cys91/Cys111 and Cys95/Cys107.

The protein belongs to the conotoxin R superfamily. Expressed by the venom duct.

It is found in the secreted. The protein is Conotoxin vil14.4 of Conus villepinii (Villepin's cone).